The primary structure comprises 479 residues: ATP synthase subunit beta (479 aa).

Position 153-160 (153-160 (GGAGVGKT)) interacts with ATP.

It belongs to the ATPase alpha/beta chains family. In terms of assembly, F-type ATPases have 2 components, CF(1) - the catalytic core - and CF(0) - the membrane proton channel. CF(1) has five subunits: alpha(3), beta(3), gamma(1), delta(1), epsilon(1). CF(0) has three main subunits: a(1), b(2) and c(9-12). The alpha and beta chains form an alternating ring which encloses part of the gamma chain. CF(1) is attached to CF(0) by a central stalk formed by the gamma and epsilon chains, while a peripheral stalk is formed by the delta and b chains.

Its subcellular location is the cell membrane. It carries out the reaction ATP + H2O + 4 H(+)(in) = ADP + phosphate + 5 H(+)(out). Its activity is regulated as follows. Increases 2-fold following exposure to low pH. Functionally, produces ATP from ADP in the presence of a proton gradient across the membrane. The catalytic sites are hosted primarily by the beta subunits. This chain is ATP synthase subunit beta, found in Lactobacillus acidophilus (strain ATCC 700396 / NCK56 / N2 / NCFM).